The sequence spans 286 residues: Small ribosomal subunit protein uS3 (286 aa).

In terms of domain architecture, KH type-2 spans 39 to 107 (VREYLKKKLA…PVHVNIEEIR (69 aa)). Residues 213 to 286 (QAGAGTAAPQ…KPGVNDAAAS (74 aa)) form a disordered region. Over residues 241–262 (GRADARSDGKAGEKKGPRKSDN) the composition is skewed to basic and acidic residues.

It belongs to the universal ribosomal protein uS3 family. In terms of assembly, part of the 30S ribosomal subunit. Forms a tight complex with proteins S10 and S14.

In terms of biological role, binds the lower part of the 30S subunit head. Binds mRNA in the 70S ribosome, positioning it for translation. This chain is Small ribosomal subunit protein uS3, found in Nitrosospira multiformis (strain ATCC 25196 / NCIMB 11849 / C 71).